A 134-amino-acid polypeptide reads, in one-letter code: uncharacterized protein (134 aa).

This is an uncharacterized protein from Streptomyces coelicolor (strain ATCC BAA-471 / A3(2) / M145).